The following is a 497-amino-acid chain: FAD-linked oxidoreductase fogF (497 aa).

A signal peptide spans 1–18; the sequence is MRRNILTALACSWLTAHA. The FAD-binding PCMH-type domain maps to 59–229; the sequence is NAPTYAGAIS…TSATYKLHKL (171 aa).

This sequence belongs to the oxygen-dependent FAD-linked oxidoreductase family. The cofactor is FAD.

Its pathway is secondary metabolite biosynthesis. Its function is as follows. FAD-linked oxidoreductase; part of the gene cluster that mediates the biosynthesis of flavoglaucin and congeners (including aspergin, dihydroauroglaucin and auroglaucin), prenylated salicylaldehyde derivatives carrying a saturated or an unsaturated C-7 side chain. The PKS fogA releases the carboxylic acid (8E,10E,12E)-3,5,7-trihydroxytetradeca-8,10,12-trienoic acid as its product, as well as derivatives with one and two double bonds. FogA is indeed able to reduce the initial triketide, thus being at least partially responsible for the differently saturated heptyl side chains of flavoglaucin congeners. The oxidoreductases fogB, fogC and fogD modify the nascent polyketide in fogA-bound form and, together, fogA, fogB, fogC and fogD are necessary for the formation of the aromatic core and the cyclized PKS products are released as salicyl alcohols. In particular, fogB is responsible for oxidation of a hydroxyl group or reduction of remaining double bond(s) at the C-7 residue whereas fogD is probably involved in the reductive release of the modified PKS products. The cytochrome P450 monooxygenase fogE is then responsible for the hydroxylation at C-3 of the benzene ring. The fogE products are substrates of the prenyltransferase fogH and the prenylated benzyl alcohols are subsequently oxidized by the fogF to produce the final aryl aldehydes flavoglaucin and congeners. The short-chain dehydrogenase fogG does not seem to be involved in the biosynthesis of the prenylated salicylaldehyde derivatives. This is FAD-linked oxidoreductase fogF from Aspergillus ruber (strain CBS 135680).